The primary structure comprises 413 residues: Glucose-1-phosphate adenylyltransferase (413 aa).

Alpha-D-glucose 1-phosphate is bound by residues Y102, G167, 182–183 (EK), and S200.

Belongs to the bacterial/plant glucose-1-phosphate adenylyltransferase family. As to quaternary structure, homotetramer.

It catalyses the reaction alpha-D-glucose 1-phosphate + ATP + H(+) = ADP-alpha-D-glucose + diphosphate. It participates in glycan biosynthesis; glycogen biosynthesis. Functionally, involved in the biosynthesis of ADP-glucose, a building block required for the elongation reactions to produce glycogen. Catalyzes the reaction between ATP and alpha-D-glucose 1-phosphate (G1P) to produce pyrophosphate and ADP-Glc. The chain is Glucose-1-phosphate adenylyltransferase from Deinococcus deserti (strain DSM 17065 / CIP 109153 / LMG 22923 / VCD115).